The sequence spans 96 residues: MSRRCELSGKAVMSGNNVSHANRKTRRRFLPNLCQVTLISDALGRQFSLRVSAHALRSVEHNGGLDPFLLKASDAQLSSRALKLKRAIEKVQAVAA.

This sequence belongs to the bacterial ribosomal protein bL28 family.

The protein is Large ribosomal subunit protein bL28 of Parvibaculum lavamentivorans (strain DS-1 / DSM 13023 / NCIMB 13966).